The primary structure comprises 65 residues: Small ribosomal subunit protein bS21 (65 aa).

It belongs to the bacterial ribosomal protein bS21 family.

In Chlorobium chlorochromatii (strain CaD3), this protein is Small ribosomal subunit protein bS21.